A 261-amino-acid polypeptide reads, in one-letter code: U11/U12 small nuclear ribonucleoprotein 31 kDa protein (261 aa).

A disordered region spans residues 18 to 51 (YYRYSSVAAPPPSNPKHQPSSSAKSSAPGGGSGG). An RRM domain is found at 57–135 (STLYVSNLDF…RKLTVSIAAD (79 aa)). A CCHC-type zinc finger spans residues 153 to 169 (RCYECGDEGHLSYECPK). Residues 165-261 (YECPKNQLGP…YFSDESDDED (97 aa)) are disordered. The segment covering 226 to 235 (AGERLRKREA) has biased composition (basic and acidic residues).

As to quaternary structure, component of the U11/U12 snRNPs that are part of the U12-type spliceosome. As to expression, ubiquitous. Abundantly expressed in the shoot apical neristem.

The protein resides in the nucleus. Functionally, RNA chaperone required for proper U12 intron splicing and for normal growth and development of plants. Mainly responsible for meristem activity. Plays a role in regulating cell division. In Arabidopsis thaliana (Mouse-ear cress), this protein is U11/U12 small nuclear ribonucleoprotein 31 kDa protein (SNRNP31).